The primary structure comprises 130 residues: Small ribosomal subunit protein uS8 (130 aa).

The protein belongs to the universal ribosomal protein uS8 family.

The polypeptide is Small ribosomal subunit protein uS8 (RPS22) (Candida glabrata (strain ATCC 2001 / BCRC 20586 / JCM 3761 / NBRC 0622 / NRRL Y-65 / CBS 138) (Yeast)).